Reading from the N-terminus, the 602-residue chain is Wings apart-like protein homolog 1 (602 aa).

The interval 34-66 is disordered; the sequence is NKQKRSPGQTVSKRLHKKQRVVSNPDLSLPSSP. The segment covering 54–66 has biased composition (polar residues); sequence VVSNPDLSLPSSP. The 333-residue stretch at 160–492 folds into the WAPL domain; the sequence is IQMKSIHELR…LGLVEESHEF (333 aa).

Belongs to the WAPL family.

It is found in the nucleus. It localises to the chromosome. Its function is as follows. Regulator of sister chromatid cohesion in mitosis which negatively regulates cohesin association with chromatin. The protein is Wings apart-like protein homolog 1 (wpl1) of Schizosaccharomyces pombe (strain 972 / ATCC 24843) (Fission yeast).